The primary structure comprises 210 residues: Thymidylate kinase (210 aa).

10-17 (GPEGAGKS) is an ATP binding site.

The protein belongs to the thymidylate kinase family.

The enzyme catalyses dTMP + ATP = dTDP + ADP. Functionally, phosphorylation of dTMP to form dTDP in both de novo and salvage pathways of dTTP synthesis. The protein is Thymidylate kinase of Pseudomonas aeruginosa (strain LESB58).